The primary structure comprises 995 residues: Endo-beta-N-acetylglucosaminidase EndoS (995 aa).

The signal sequence occupies residues 1–36; the sequence is MDKHLLVKRTLGCVCAATLMGAALATHHDSLNTVKA. Residues 112–432 enclose the GH18 domain; the sequence is SLYGGYFRTW…KDATDNIFHS (321 aa). 3 residues coordinate a glycoprotein: H151, W153, and R186. Residue E235 is the Proton donor of the active site. Positions 237, 303, 305, 349, 350, 356, and 402 each coordinate a glycoprotein. LRR repeat units follow at residues 437–460, 478–503, 562–585, and 586–609; these read SKAL…DFPD, LERF…KFKK, LTGL…DAAT, and LTSL…ENRQ. The interval 765-923 is carbohydrate-binding module (CBM); the sequence is MVNLAEGATV…VPELQILGYP (159 aa). Ca(2+)-binding residues include K786, D789, Q791, P915, and E916. Residues 924 to 995 are three-helix bundle (3H); the sequence is LPNADTIMKT…CIEKRQLLKK (72 aa).

It belongs to the glycosyl hydrolase 18 family. In terms of processing, cleaved by SpeB protease; leading to loss of endoglucosidase activity. EndoS is produced and secreted prior to SpeB, suggesting that it is degraded after acting as a host immune evasion factor.

It localises to the secreted. The protein resides in the host extracellular space. It carries out the reaction an N(4)-(oligosaccharide-(1-&gt;3)-[oligosaccharide-(1-&gt;6)]-beta-D-Man-(1-&gt;4)-beta-D-GlcNAc-(1-&gt;4)-alpha-D-GlcNAc)-L-asparaginyl-[protein] + H2O = an oligosaccharide-(1-&gt;3)-[oligosaccharide-(1-&gt;6)]-beta-D-Man-(1-&gt;4)-D-GlcNAc + N(4)-(N-acetyl-beta-D-glucosaminyl)-L-asparaginyl-[protein]. In terms of biological role, endoglucosidase that acts as a host immune evasion factor by mediating hydrolysis of the N-linked glycan from the Fc region of host immunoglobulin-gamma (IgG) during infection. Specifically catalyzes the hydrolysis of the beta-1,4 linkage between the first two N-acetylglucosamine residues of the complex-type N-linked glycan located on 'Asn-297' of the Fc region of IgG antibodies (IGHG1, IGHG2, IGHG3 or IGHG4), thereby preventing interaction between IgGs and Fc receptors and ability to activate the complement pathway. Shows a specificity for biantennary complex type N-glycans; does neither cleave larger complex type glycans nor oligomannose and nor hybrid-type glycans. Specifically acts on IgGs; does not act on immunoglobulin alpha, beta, delta or mu. The sequence is that of Endo-beta-N-acetylglucosaminidase EndoS from Streptococcus pyogenes serotype M1.